We begin with the raw amino-acid sequence, 52 residues long: Alpha-crystallin B chain (52 aa).

This sequence belongs to the small heat shock protein (HSP20) family. In terms of assembly, homodimer. Aggregates with homologous proteins, including alpha-A-crystallin and the small heat shock protein HSPB1, to form large heteromeric complexes.

Functionally, may contribute to the transparency and refractive index of the lens. This is Alpha-crystallin B chain (CRYAB) from Turdus merula (Common blackbird).